The chain runs to 160 residues: MTTQEDTTGLHQKTSLWTMSRPGAKKVMNSYFIAGCGPAVCYYAVSWLRQGFSINLTSFGRIPWPHAGVGTCPSPQSWISPFLQSHREHHYAKTSSHSQPSPQSLALCLAYSRCSINICQMTECISLASGCHQALREPGRSEESFWIPATPYISNIFSES.

A helical transmembrane segment spans residues 27–47 (VMNSYFIAGCGPAVCYYAVSW).

The protein resides in the membrane. This is an uncharacterized protein from Homo sapiens (Human).